The following is a 238-amino-acid chain: CBS domain-containing protein CBSX2, chloroplastic (238 aa).

A chloroplast-targeting transit peptide spans 1-71 (MGSISLSNSM…ASVNNNNSVP (71 aa)). CBS domains follow at residues 83 to 145 (MTPR…QNDT) and 177 to 234 (MTPS…KRET).

The protein localises to the plastid. Its subcellular location is the chloroplast stroma. The sequence is that of CBS domain-containing protein CBSX2, chloroplastic (CBSX2) from Arabidopsis thaliana (Mouse-ear cress).